The sequence spans 71 residues: Biotinylated protein TB7.3 homolog (71 aa).

Residues 2–71 (AEDVRAEIVA…QAGDLIAVIS (70 aa)) enclose the Biotinyl-binding domain. The residue at position 37 (K37) is an N6-biotinyllysine.

The chain is Biotinylated protein TB7.3 homolog from Mycobacterium leprae (strain TN).